A 398-amino-acid chain; its full sequence is uncharacterized protein (398 aa).

2 helical membrane-spanning segments follow: residues 31–51 (VVFSASLSLIIGLITGCCLLF) and 56–76 (AFITSGICLALLVSVISFFGC).

It belongs to the chlamydial CPn_0129/CT_036/TC_0306 family.

The protein resides in the cell membrane. This is an uncharacterized protein from Chlamydia muridarum (strain MoPn / Nigg).